Reading from the N-terminus, the 455-residue chain is Hydroxymethylglutaryl-CoA synthase 2 (455 aa).

The active-site Proton donor/acceptor is the E86. C120 acts as the Acyl-thioester intermediate in catalysis. 7 residues coordinate (3S)-3-hydroxy-3-methylglutaryl-CoA: C120, T161, S211, H255, K264, N329, and S363. H255 (proton donor/acceptor) is an active-site residue.

It belongs to the thiolase-like superfamily. HMG-CoA synthase family.

The catalysed reaction is acetoacetyl-CoA + acetyl-CoA + H2O = (3S)-3-hydroxy-3-methylglutaryl-CoA + CoA + H(+). The protein operates within metabolic intermediate biosynthesis; (R)-mevalonate biosynthesis; (R)-mevalonate from acetyl-CoA: step 2/3. Functionally, this enzyme condenses acetyl-CoA with acetoacetyl-CoA to form HMG-CoA, which is the substrate for HMG-CoA reductase. The protein is Hydroxymethylglutaryl-CoA synthase 2 (HMGCS-2) of Blattella germanica (German cockroach).